The sequence spans 545 residues: Chaperonin GroEL 1 (545 aa).

ATP contacts are provided by residues 30-33, Lys-51, 87-91, Gly-415, 479-481, and Asp-495; these read TLGP, DGTTT, and NAA.

This sequence belongs to the chaperonin (HSP60) family. In terms of assembly, forms a cylinder of 14 subunits composed of two heptameric rings stacked back-to-back. Interacts with the co-chaperonin GroES.

It localises to the cytoplasm. It catalyses the reaction ATP + H2O + a folded polypeptide = ADP + phosphate + an unfolded polypeptide.. Functionally, together with its co-chaperonin GroES, plays an essential role in assisting protein folding. The GroEL-GroES system forms a nano-cage that allows encapsulation of the non-native substrate proteins and provides a physical environment optimized to promote and accelerate protein folding. The sequence is that of Chaperonin GroEL 1 from Methylococcus capsulatus (strain ATCC 33009 / NCIMB 11132 / Bath).